We begin with the raw amino-acid sequence, 140 residues long: Prepilin peptidase-dependent protein A (140 aa).

A propeptide spanning residues 1-23 (MLLLKASAICGKGNEGKRNKKGG) is cleaved from the precursor. An N-methylphenylalanine modification is found at Phe-24. A helical transmembrane segment spans residues 24-44 (FTLIELTVVLAIMAIILMVIA).

The protein resides in the membrane. Not yet known. In Clostridium perfringens (strain 13 / Type A), this protein is Prepilin peptidase-dependent protein A (ppdA).